A 716-amino-acid chain; its full sequence is Translation initiation factor IF-2 (716 aa).

The tract at residues 50–137 is disordered; sequence FKKSAKPAGN…KPKKELPEKI (88 aa). Over residues 92–101 the composition is skewed to low complexity; it reads NNVQNTQFNN. Residues 102–118 are compositionally biased toward basic residues; it reads KNKKKNNNNKKNKRGKN. Residues 125–137 show a composition bias toward basic and acidic residues; it reads KQFKPKKELPEKI. Residues 217–386 form the tr-type G domain; that stretch reads IRPPVVTIMG…LLVSEVEELK (170 aa). The tract at residues 226-233 is G1; the sequence is GHVDHGKT. GTP is bound at residue 226-233; that stretch reads GHVDHGKT. Residues 251–255 are G2; it reads GITQH. The tract at residues 272–275 is G3; it reads DTPG. GTP-binding positions include 272–276 and 326–329; these read DTPGH and NKID. Residues 326 to 329 form a G4 region; it reads NKID. The tract at residues 362–364 is G5; it reads SAL.

Belongs to the TRAFAC class translation factor GTPase superfamily. Classic translation factor GTPase family. IF-2 subfamily.

The protein resides in the cytoplasm. Functionally, one of the essential components for the initiation of protein synthesis. Protects formylmethionyl-tRNA from spontaneous hydrolysis and promotes its binding to the 30S ribosomal subunits. Also involved in the hydrolysis of GTP during the formation of the 70S ribosomal complex. The chain is Translation initiation factor IF-2 from Bacillus licheniformis (strain ATCC 14580 / DSM 13 / JCM 2505 / CCUG 7422 / NBRC 12200 / NCIMB 9375 / NCTC 10341 / NRRL NRS-1264 / Gibson 46).